The sequence spans 179 residues: ATP synthase subunit delta (179 aa).

This sequence belongs to the ATPase delta chain family. In terms of assembly, F-type ATPases have 2 components, F(1) - the catalytic core - and F(0) - the membrane proton channel. F(1) has five subunits: alpha(3), beta(3), gamma(1), delta(1), epsilon(1). F(0) has three main subunits: a(1), b(2) and c(10-14). The alpha and beta chains form an alternating ring which encloses part of the gamma chain. F(1) is attached to F(0) by a central stalk formed by the gamma and epsilon chains, while a peripheral stalk is formed by the delta and b chains.

The protein localises to the cell inner membrane. Its function is as follows. F(1)F(0) ATP synthase produces ATP from ADP in the presence of a proton or sodium gradient. F-type ATPases consist of two structural domains, F(1) containing the extramembraneous catalytic core and F(0) containing the membrane proton channel, linked together by a central stalk and a peripheral stalk. During catalysis, ATP synthesis in the catalytic domain of F(1) is coupled via a rotary mechanism of the central stalk subunits to proton translocation. Functionally, this protein is part of the stalk that links CF(0) to CF(1). It either transmits conformational changes from CF(0) to CF(1) or is implicated in proton conduction. The protein is ATP synthase subunit delta of Burkholderia pseudomallei (strain 1710b).